A 338-amino-acid chain; its full sequence is tRNA N6-adenosine threonylcarbamoyltransferase (338 aa).

Histidine 111 and histidine 115 together coordinate Fe cation. Substrate-binding positions include 134-138 (LVSGG), aspartate 167, glycine 180, and asparagine 272. Fe cation is bound at residue aspartate 300.

The protein belongs to the KAE1 / TsaD family. Fe(2+) is required as a cofactor.

It is found in the cytoplasm. The catalysed reaction is L-threonylcarbamoyladenylate + adenosine(37) in tRNA = N(6)-L-threonylcarbamoyladenosine(37) in tRNA + AMP + H(+). Its function is as follows. Required for the formation of a threonylcarbamoyl group on adenosine at position 37 (t(6)A37) in tRNAs that read codons beginning with adenine. Is involved in the transfer of the threonylcarbamoyl moiety of threonylcarbamoyl-AMP (TC-AMP) to the N6 group of A37, together with TsaE and TsaB. TsaD likely plays a direct catalytic role in this reaction. The protein is tRNA N6-adenosine threonylcarbamoyltransferase of Aliivibrio salmonicida (strain LFI1238) (Vibrio salmonicida (strain LFI1238)).